The sequence spans 346 residues: Uroporphyrinogen decarboxylase (346 aa).

Substrate-binding positions include 21 to 25 (RQAGR), D71, Y146, S201, and H316.

This sequence belongs to the uroporphyrinogen decarboxylase family. As to quaternary structure, homodimer.

The protein localises to the cytoplasm. It catalyses the reaction uroporphyrinogen III + 4 H(+) = coproporphyrinogen III + 4 CO2. Its pathway is porphyrin-containing compound metabolism; protoporphyrin-IX biosynthesis; coproporphyrinogen-III from 5-aminolevulinate: step 4/4. Functionally, catalyzes the decarboxylation of four acetate groups of uroporphyrinogen-III to yield coproporphyrinogen-III. The protein is Uroporphyrinogen decarboxylase of Rickettsia africae (strain ESF-5).